The primary structure comprises 493 residues: Ribose import ATP-binding protein RbsA (493 aa).

2 consecutive ABC transporter domains span residues 5-241 and 252-491; these read LKIS…VGRR and EKGE…AAAI. 37 to 44 lines the ATP pocket; it reads GENGAGKS.

This sequence belongs to the ABC transporter superfamily. Ribose importer (TC 3.A.1.2.1) family. As to quaternary structure, the complex is composed of an ATP-binding protein (RbsA), two transmembrane proteins (RbsC) and a solute-binding protein (RbsB).

It is found in the cell inner membrane. The catalysed reaction is D-ribose(out) + ATP + H2O = D-ribose(in) + ADP + phosphate + H(+). Functionally, part of the ABC transporter complex RbsABC involved in ribose import. Responsible for energy coupling to the transport system. The chain is Ribose import ATP-binding protein RbsA from Haemophilus influenzae (strain ATCC 51907 / DSM 11121 / KW20 / Rd).